Here is a 241-residue protein sequence, read N- to C-terminus: MICKYIYLAIFVFGTARIPKPSACLPGDFWKTKQEIEVQKKIDEFNQYRISALWSMVSKMEDPTLSGLDGRYIVVDQNQLYLSPISKKSEKLIFRFNLNHRGYLEVKSGFRAFIENKYSPLVFHATSWTNGFSIDVQKTNPISSYTPFVMQYLNSPWFSACRVESGNWQVFVGRMNMNEHEHCYPMSLIMKREDTWLRYYHKNNRNPIDWKLVQDCAMWPDGYPGTGRESEKGSNLEAITR.

It localises to the mitochondrion. In terms of biological role, has a role in meiosis. This chain is Meiotically up-regulated gene 130 protein (mug130), found in Schizosaccharomyces pombe (strain 972 / ATCC 24843) (Fission yeast).